The chain runs to 383 residues: Acetylornithine deacetylase (383 aa).

His80 lines the Zn(2+) pocket. Asp82 is a catalytic residue. A Zn(2+)-binding site is contributed by Asp112. Residue Glu144 is part of the active site. The Zn(2+) site is built by Glu145, Glu169, and His355.

It belongs to the peptidase M20A family. ArgE subfamily. Homodimer. The cofactor is Zn(2+). Requires Co(2+) as cofactor. Glutathione is required as a cofactor.

The protein localises to the cytoplasm. The catalysed reaction is N(2)-acetyl-L-ornithine + H2O = L-ornithine + acetate. Its pathway is amino-acid biosynthesis; L-arginine biosynthesis; L-ornithine from N(2)-acetyl-L-ornithine (linear): step 1/1. Functionally, catalyzes the hydrolysis of the amide bond of N(2)-acetylated L-amino acids. Cleaves the acetyl group from N-acetyl-L-ornithine to form L-ornithine, an intermediate in L-arginine biosynthesis pathway, and a branchpoint in the synthesis of polyamines. The sequence is that of Acetylornithine deacetylase from Salmonella typhimurium (strain LT2 / SGSC1412 / ATCC 700720).